The primary structure comprises 380 residues: Cytochrome b (380 aa).

4 helical membrane passes run 34–54 (FGSLLGVCLIAQIATGLFLAM), 78–99 (WLLRNLHANGASFFFICIYFHI), 114–134 (WNIGVILLFLVMATAFVGYVL), and 179–199 (FFTFHFILPFIIAAASMINLL). Heme b-binding residues include His84 and His98. His183 lines the heme b pocket. An a ubiquinone-binding site is contributed by His202. The next 4 helical transmembrane spans lie at 227–247 (YKDLLGFVIMLGALASLSTFA), 289–309 (LGGVLALLLSIMILFLMPIIH), 321–341 (IAKTFFWALIANTAILTWIGG), and 348–368 (FITIGQIASGLYFLIFVLLIP).

It belongs to the cytochrome b family. As to quaternary structure, the cytochrome bc1 complex contains 3 respiratory subunits (MT-CYB, CYC1 and UQCRFS1), 2 core proteins (UQCRC1 and UQCRC2) and probably 6 low-molecular weight proteins. Heme b serves as cofactor.

It localises to the mitochondrion inner membrane. Its function is as follows. Component of the ubiquinol-cytochrome c reductase complex (complex III or cytochrome b-c1 complex) that is part of the mitochondrial respiratory chain. The b-c1 complex mediates electron transfer from ubiquinol to cytochrome c. Contributes to the generation of a proton gradient across the mitochondrial membrane that is then used for ATP synthesis. This chain is Cytochrome b (mt-cyb), found in Pelophylax plancyi (Korean pond frog).